Consider the following 324-residue polypeptide: Porphobilinogen deaminase (324 aa).

Residue Cys246 is modified to S-(dipyrrolylmethanemethyl)cysteine. Positions 261–279 (GQAPEEGGRAAASQAPAAL) are insert.

This sequence belongs to the HMBS family. In terms of assembly, monomer. It depends on dipyrromethane as a cofactor.

It catalyses the reaction 4 porphobilinogen + H2O = hydroxymethylbilane + 4 NH4(+). It participates in porphyrin-containing compound metabolism; protoporphyrin-IX biosynthesis; coproporphyrinogen-III from 5-aminolevulinate: step 2/4. In terms of biological role, tetrapolymerization of the monopyrrole PBG into the hydroxymethylbilane pre-uroporphyrinogen in several discrete steps. This chain is Porphobilinogen deaminase (hemC), found in Paenibacillus macerans (Bacillus macerans).